Reading from the N-terminus, the 115-residue chain is Large ribosomal subunit protein bL20 (115 aa).

Belongs to the bacterial ribosomal protein bL20 family.

Binds directly to 23S ribosomal RNA and is necessary for the in vitro assembly process of the 50S ribosomal subunit. It is not involved in the protein synthesizing functions of that subunit. This is Large ribosomal subunit protein bL20 from Prochlorococcus marinus (strain MIT 9312).